The following is a 227-amino-acid chain: MICOS complex subunit MIC19 (227 aa).

Gly2 carries N-myristoyl glycine lipidation. Ser29 bears the Phosphoserine mark. The disordered stretch occupies residues 34 to 60; the sequence is DRMKETSPSGPKSQRYSGTYGASVSDE. The segment covering 39 to 55 has biased composition (polar residues); that stretch reads TSPSGPKSQRYSGTYGA. Tyr49 carries the phosphotyrosine modification. Ser50, Ser56, and Ser58 each carry phosphoserine. Position 142 is an N6-acetyllysine (Lys142). One can recognise a CHCH domain in the interval 180-222; it reads HPVCADLQAQILQCYRQNTQQTLSCSALASQYMRCVNQAKQST. 2 short sequence motifs (cx9C motif) span residues 183 to 193 and 204 to 214; these read CADLQAQILQC and CSALASQYMRC. Intrachain disulfides connect Cys183/Cys214 and Cys193/Cys204.

This sequence belongs to the MICOS complex subunit Mic19 family. Metazoan Mic19 subfamily. In terms of assembly, component of the mitochondrial contact site and cristae organizing system (MICOS) complex, composed of at least MICOS10/MIC10, CHCHD3/MIC19, CHCHD6/MIC25, APOOL/MIC27, IMMT/MIC60, APOO/MIC23/MIC26 and MICOS13/MIC13. This complex was also known under the names MINOS or MitOS complex. The MICOS complex associates with mitochondrial outer membrane proteins SAMM50, MTX1 and MTX2 (together described as components of the mitochondrial outer membrane sorting assembly machinery (SAM) complex) and DNAJC11, mitochondrial inner membrane protein TMEM11 and with HSPA9. The MICOS and SAM complexes together with DNAJC11 are part of a large protein complex spanning both membranes termed the mitochondrial intermembrane space bridging (MIB) complex. Interacts with HSPA1A/HSPA1B and OPA1, preferentially with the soluble OPA1 form. Interacts with IMMT/MIC60.

Its subcellular location is the mitochondrion inner membrane. It is found in the cytoplasm. The protein resides in the nucleus. The protein localises to the mitochondrion. Its function is as follows. Component of the MICOS complex, a large protein complex of the mitochondrial inner membrane that plays crucial roles in the maintenance of crista junctions, inner membrane architecture, and formation of contact sites to the outer membrane. Has also been shown to function as a transcription factor which binds to the BAG1 promoter and represses BAG1 transcription. Plays an important role in the maintenance of the MICOS complex stability and the mitochondrial cristae morphology. In Bos taurus (Bovine), this protein is MICOS complex subunit MIC19 (CHCHD3).